A 506-amino-acid chain; its full sequence is 2-isopropylmalate synthase (506 aa).

One can recognise a Pyruvate carboxyltransferase domain in the interval 4–266 (ILFMDTTLRD…EPSMTLKEIK (263 aa)). Positions 13, 201, 203, and 237 each coordinate Mn(2+). A regulatory domain region spans residues 390–506 (NITQLQVHFV…KLKSFIQLVK (117 aa)).

This sequence belongs to the alpha-IPM synthase/homocitrate synthase family. LeuA type 1 subfamily. In terms of assembly, homodimer. The cofactor is Mn(2+).

The protein resides in the cytoplasm. The enzyme catalyses 3-methyl-2-oxobutanoate + acetyl-CoA + H2O = (2S)-2-isopropylmalate + CoA + H(+). It functions in the pathway amino-acid biosynthesis; L-leucine biosynthesis; L-leucine from 3-methyl-2-oxobutanoate: step 1/4. Its function is as follows. Catalyzes the condensation of the acetyl group of acetyl-CoA with 3-methyl-2-oxobutanoate (2-ketoisovalerate) to form 3-carboxy-3-hydroxy-4-methylpentanoate (2-isopropylmalate). This chain is 2-isopropylmalate synthase, found in Bacillus cereus (strain ZK / E33L).